The sequence spans 135 residues: UPF0355 protein MRSA252 (135 aa).

It belongs to the UPF0355 family.

The protein is UPF0355 protein MRSA252 of Staphylococcus aureus (strain MRSA252).